Consider the following 502-residue polypeptide: Cytochrome P450 monooxygenase orf6 (502 aa).

Residues 3–25 form a helical membrane-spanning segment; it reads ALWVLAVALVAYFLCLSIYRLFL. A glycan (N-linked (GlcNAc...) asparagine) is linked at Asn382. Position 445 (Cys445) interacts with heme.

Belongs to the cytochrome P450 family. Heme serves as cofactor.

The protein resides in the membrane. Its pathway is mycotoxin biosynthesis. In terms of biological role, cytochrome P450 monooxygenase; part of the gene cluster that mediates the biosynthesis of brefeldin A (BFA), a protein transport inhibitor that shows antiviral, antifungal, and antitumor properties. The proposed biosynthesis of BFA involves formation of an acyclic polyketide chain that is differentially tailored throughout the backbone. The highly reducing polyketide synthase Bref-PKS is proposed to synthesize the precisely reduced octaketide precursor, which could then be directly offloaded by the thiohydrolase enzyme Bref-TH followed by a cytochrome P450 monooxygenase-mediated formation of the cyclopentane ring and macrocyclization to afford 7-deoxy BFA. Alternatively, the first ring annulation can also occur on the ACP-tethered intermediate before the thiohydrolase release and lactonization. The C7-hydroxylation by another cytochrome P450 monooxygenase is believed to be the final step in the process to obtain the final structure of BFA. In addition to the HRPKS Bref-PKS and the thiohydrolase Bref-TH, the brefeldin A biosynthesis cluster contains 4 cytochrome p450 monooxygenases (called orf3 to orf6), as well a the probable cluster-specific transcription regulator orf8. The sequence is that of Cytochrome P450 monooxygenase orf6 from Eupenicillium brefeldianum (Penicillium brefeldianum).